Reading from the N-terminus, the 68-residue chain is Small ribosomal subunit protein bS21 (68 aa).

The protein belongs to the bacterial ribosomal protein bS21 family.

This is Small ribosomal subunit protein bS21 from Endomicrobium trichonymphae.